Here is a 324-residue protein sequence, read N- to C-terminus: Brorin (324 aa).

Residues 1–27 (MPSSSAMAVGALSSSLLVTCCLMVALC) form the signal peptide. The tract at residues 37–126 (AQAPEQPGQE…TPQGEPPAAA (90 aa)) is disordered. Composition is skewed to basic and acidic residues over residues 44–56 (GQEK…RDSP) and 64–78 (RASR…DWKS). Positions 92-107 (KQKQAWAAQGGSAKAA) are enriched in low complexity. The short motif at 114 to 116 (RGD) is the Mediates cell adhesion element. 2 VWFC domains span residues 152-211 (KGCV…PQCK) and 215-273 (NYCE…PICK).

In terms of assembly, peripherally associated with AMPAR complex. AMPAR complex consists of an inner core made of 4 pore-forming GluA/GRIA proteins (GRIA1, GRIA2, GRIA3 and GRIA4) and 4 major auxiliary subunits arranged in a twofold symmetry. One of the two pairs of distinct binding sites is occupied either by CNIH2, CNIH3 or CACNG2, CACNG3. The other harbors CACNG2, CACNG3, CACNG4, CACNG8 or GSG1L. This inner core of AMPAR complex is complemented by outer core constituents binding directly to the GluA/GRIA proteins at sites distinct from the interaction sites of the inner core constituents. Outer core constituents include at least PRRT1, PRRT2, CKAMP44/SHISA9, FRRS1L and NRN1. The proteins of the inner and outer core serve as a platform for other, more peripherally associated AMPAR constituents, including VWC2. Alone or in combination, these auxiliary subunits control the gating and pharmacology of the AMPAR complex and profoundly impact their biogenesis and protein processing. As to expression, predominantly expressed in the brain (at protein level). It is expressed in the neurons but not the glial cells.

It is found in the secreted. The protein resides in the extracellular space. It localises to the extracellular matrix. Its subcellular location is the basement membrane. The protein localises to the synapse. Its function is as follows. BMP antagonist which may play a role in neural development. Promotes cell adhesion. The protein is Brorin (Vwc2) of Mus musculus (Mouse).